Reading from the N-terminus, the 390-residue chain is Succinate--CoA ligase [ADP-forming] subunit beta (390 aa).

The 240-residue stretch at 9-248 folds into the ATP-grasp domain; that stretch reads KDILRKFGVS…ISEEDPFEVE (240 aa). ATP is bound by residues Lys-50, 57-59, Glu-103, Met-106, and Glu-111; that span reads GRG. Positions 203 and 217 each coordinate Mg(2+). Substrate contacts are provided by residues Asn-268 and 325–327; that span reads GIV.

Belongs to the succinate/malate CoA ligase beta subunit family. In terms of assembly, heterotetramer of two alpha and two beta subunits. Mg(2+) is required as a cofactor.

The enzyme catalyses succinate + ATP + CoA = succinyl-CoA + ADP + phosphate. It catalyses the reaction GTP + succinate + CoA = succinyl-CoA + GDP + phosphate. The protein operates within carbohydrate metabolism; tricarboxylic acid cycle; succinate from succinyl-CoA (ligase route): step 1/1. In terms of biological role, succinyl-CoA synthetase functions in the citric acid cycle (TCA), coupling the hydrolysis of succinyl-CoA to the synthesis of either ATP or GTP and thus represents the only step of substrate-level phosphorylation in the TCA. The beta subunit provides nucleotide specificity of the enzyme and binds the substrate succinate, while the binding sites for coenzyme A and phosphate are found in the alpha subunit. In Prosthecochloris aestuarii (strain DSM 271 / SK 413), this protein is Succinate--CoA ligase [ADP-forming] subunit beta.